Consider the following 571-residue polypeptide: Cationic amino acid transporter 8 (571 aa).

N-linked (GlcNAc...) asparagine glycosylation occurs at Asn-35. Helical transmembrane passes span 39-59 (FWLL…YFDW), 94-114 (SLYP…GFLY), 117-137 (IGPK…WVFL), 148-168 (FLSF…ILTI), 177-197 (TFIL…PATL), and 217-237 (IFLI…LMPF). N-linked (GlcNAc...) asparagine glycans are attached at residues Asn-298, Asn-325, and Asn-346. The chain crosses the membrane as a helical span at residues 365-385 (LFFKVLLSYPSICIIVYFILF). Asn-386 carries N-linked (GlcNAc...) asparagine glycosylation. 5 consecutive transmembrane segments (helical) span residues 405–425 (SIIN…IIFG), 433–453 (SAII…TALI), 461–481 (VSAF…YCFI), 488–508 (VVFG…SLLC), and 528–548 (VVLL…VLYF).

The protein belongs to the SLC43A transporter (TC 2.A.1.44) family.

It localises to the membrane. The catalysed reaction is L-arginine(in) = L-arginine(out). In terms of biological role, sodium-independent cationic amino acid transporter. Transports L-arginine, L-lysine, L-histidine and L-ornithine. The sequence is that of Cationic amino acid transporter 8 from Plasmodium vivax (strain Salvador I).